A 343-amino-acid chain; its full sequence is MYNLARQLLFKLSPETSHDLSLDLIGAGGRLGLNGLLGKSAAKLPVSVMGLEFPNPVGLAAGLDKNGAAIDGFAQLGFGFVEIGTVTPRPQPGNPKPRIFRLPNAEAIINRMGFNNLGVDNLVSRVEAAKYRGILGINIGKNFDTPVERAVDDYLICLDKAYAHASYVTVNVSSPNTPGLRSLQFGDSLKQLLEALSLRQQELTQRHGKRVPLAIKIAPDMTDEETVLVAAALIESGMDAVIATNTTLSRQGVEGLPHGDEAGGLSGAPVREKSTHIVKVLAGELAGRMPIIAAGGITEGRHAAEKIAAGASLVQIYSGFIYKGPALIRQSVDAIAAMPRTAS.

FMN-binding positions include 61-65 (AGLDK) and T85. K65 contributes to the substrate binding site. 110–114 (NRMGF) serves as a coordination point for substrate. The FMN site is built by N138 and N171. N171 lines the substrate pocket. S174 acts as the Nucleophile in catalysis. Residue N176 coordinates substrate. 2 residues coordinate FMN: K216 and T244. 245–246 (NT) provides a ligand contact to substrate. FMN is bound by residues G267, G296, and 317–318 (YS).

Belongs to the dihydroorotate dehydrogenase family. Type 2 subfamily. In terms of assembly, monomer. It depends on FMN as a cofactor.

Its subcellular location is the cell membrane. The catalysed reaction is (S)-dihydroorotate + a quinone = orotate + a quinol. It functions in the pathway pyrimidine metabolism; UMP biosynthesis via de novo pathway; orotate from (S)-dihydroorotate (quinone route): step 1/1. Functionally, catalyzes the conversion of dihydroorotate to orotate with quinone as electron acceptor. The sequence is that of Dihydroorotate dehydrogenase (quinone) from Pseudomonas syringae pv. tomato (strain ATCC BAA-871 / DC3000).